We begin with the raw amino-acid sequence, 253 residues long: CTP:phosphoglutamine cytidylyltransferase (253 aa).

The catalysed reaction is N(5)-phospho-L-glutamine + CTP + H(+) = N(5)-(cytidine 5'-diphosphoramidyl)-L-glutamine + diphosphate. It functions in the pathway capsule biogenesis; capsule polysaccharide biosynthesis. In terms of biological role, involved in the biosynthesis of the O-methyl phosphoramidate (MeOPN) group found on the capsular polysaccharide (CPS) of C.jejuni. Catalyzes the formation of CDP-L-glutamine from CTP and L-glutamine phosphate. In the presence of MnCTP, catalyzes the displacement of pyrophosphate from CTP using phosphoramidate, methyl phosphate, methyl phosphonate, phosphate, arsenate, ethanolamine phosphate, (R/S)-glycerol-1-phosphate, glycerol-2-phosphate, serinol phosphate, L-serine phosphate and 3-phospho-D-glycerate as substrate in addition to L-glutamine phosphate. This chain is CTP:phosphoglutamine cytidylyltransferase, found in Campylobacter jejuni subsp. jejuni serotype O:2 (strain ATCC 700819 / NCTC 11168).